Reading from the N-terminus, the 431-residue chain is UDP-N-acetylmuramate--L-alanine ligase (431 aa).

108–114 (GAHGKST) is an ATP binding site.

Belongs to the MurCDEF family.

It is found in the cytoplasm. The catalysed reaction is UDP-N-acetyl-alpha-D-muramate + L-alanine + ATP = UDP-N-acetyl-alpha-D-muramoyl-L-alanine + ADP + phosphate + H(+). It participates in cell wall biogenesis; peptidoglycan biosynthesis. In terms of biological role, cell wall formation. This chain is UDP-N-acetylmuramate--L-alanine ligase, found in Campylobacter jejuni subsp. jejuni serotype O:23/36 (strain 81-176).